Consider the following 305-residue polypeptide: MNQTTIKKTIGCSGIGLHSGKVVRLTLRPAPEDTGIVFHIRTEDGVHRLTPRPDDVIATGLATTLGLNGSSVATVEHLLAAIRGMQIDNIQIDIEGNEIPIMDGSAASFVFLLKDAGIARQNKPRQVYRIKKPVTYERDGKWIKAAPHDGLRIEYTIEFDHPAIGRQSMDIEVTPEAFAGIIAKARTFGFLREVEYLHSNGLALGGSLDNAIVLDEYNVLNEDGLRFDDEFVRHKILDFIGDMALLGAPLQGHFQVHCSGHALNNGFLRTISEHEELYLKRVELSETAQREHAVEAAPAGTPVAA.

Zn(2+) contacts are provided by His77, His234, and Asp238. His261 (proton donor) is an active-site residue.

Belongs to the LpxC family. It depends on Zn(2+) as a cofactor.

The enzyme catalyses a UDP-3-O-[(3R)-3-hydroxyacyl]-N-acetyl-alpha-D-glucosamine + H2O = a UDP-3-O-[(3R)-3-hydroxyacyl]-alpha-D-glucosamine + acetate. The protein operates within glycolipid biosynthesis; lipid IV(A) biosynthesis; lipid IV(A) from (3R)-3-hydroxytetradecanoyl-[acyl-carrier-protein] and UDP-N-acetyl-alpha-D-glucosamine: step 2/6. Catalyzes the hydrolysis of UDP-3-O-myristoyl-N-acetylglucosamine to form UDP-3-O-myristoylglucosamine and acetate, the committed step in lipid A biosynthesis. The protein is UDP-3-O-acyl-N-acetylglucosamine deacetylase of Oleidesulfovibrio alaskensis (strain ATCC BAA-1058 / DSM 17464 / G20) (Desulfovibrio alaskensis).